The sequence spans 340 residues: Inactive hyaluronidase B (340 aa).

Intrachain disulfides connect C21/C310 and C187/C199. N-linked (GlcNAc...) asparagine glycosylation is found at N66 and N81.

The protein belongs to the glycosyl hydrolase 56 family. N-glycosylated on at least two Asn residues by identical heptasaccharide units composed of Man, GlcNAc, and Fuc residues in the molar ration of 3:2:2. Expressed by the venom gland.

It localises to the secreted. In terms of biological role, has no hyaluronidase activity. The polypeptide is Inactive hyaluronidase B (Vespula vulgaris (Yellow jacket)).